The sequence spans 396 residues: Probable sugar efflux transporter (396 aa).

12 consecutive transmembrane segments (helical) span residues 15–35 (VLIM…PVAM), 51–71 (GLMM…AMLA), 84–104 (LFII…FWIL), 109–129 (MCIA…VMRI), 137–157 (QALG…LPIG), 168–188 (VTFG…IRLL), 209–229 (PLLL…FTAY), 245–265 (NFAT…SLLF), 276–296 (FIVV…FSTE), 297–317 (TIIA…CIGL), 333–353 (VATA…ALFG), and 365–385 (IGYT…TTHL).

The protein belongs to the major facilitator superfamily. SotB (TC 2.A.1.2) family.

It localises to the cell inner membrane. In terms of biological role, involved in the efflux of sugars. The physiological role may be the reduction of the intracellular concentration of toxic sugars or sugar metabolites. The chain is Probable sugar efflux transporter from Haemophilus influenzae (strain PittGG).